The primary structure comprises 506 residues: Probable Xaa-Pro aminopeptidase PAAG_05466 (506 aa).

Residues Asp285, Asp296, Glu433, and Glu471 each coordinate Mn(2+).

This sequence belongs to the peptidase M24B family. Mn(2+) is required as a cofactor.

It catalyses the reaction Release of any N-terminal amino acid, including proline, that is linked to proline, even from a dipeptide or tripeptide.. Catalyzes the removal of a penultimate prolyl residue from the N-termini of peptides. This chain is Probable Xaa-Pro aminopeptidase PAAG_05466, found in Paracoccidioides lutzii (strain ATCC MYA-826 / Pb01) (Paracoccidioides brasiliensis).